A 120-amino-acid polypeptide reads, in one-letter code: Small ribosomal subunit protein uS13 (120 aa).

Residues 93–120 (RKGLPVRGQTTKNNARTRKGKKKTVGSK) form a disordered region. Residues 107 to 120 (ARTRKGKKKTVGSK) are compositionally biased toward basic residues.

It belongs to the universal ribosomal protein uS13 family. Part of the 30S ribosomal subunit. Forms a loose heterodimer with protein S19. Forms two bridges to the 50S subunit in the 70S ribosome.

In terms of biological role, located at the top of the head of the 30S subunit, it contacts several helices of the 16S rRNA. In the 70S ribosome it contacts the 23S rRNA (bridge B1a) and protein L5 of the 50S subunit (bridge B1b), connecting the 2 subunits; these bridges are implicated in subunit movement. Contacts the tRNAs in the A and P-sites. In Helicobacter acinonychis (strain Sheeba), this protein is Small ribosomal subunit protein uS13.